Consider the following 1014-residue polypeptide: Calcium-transporting ATPase 2, plasma membrane-type (1014 aa).

Position 1 is an N-acetylmethionine (Met1). At 1-160 (MESYLNENFD…NKFAESEMRG (160 aa)) the chain is on the cytoplasmic side. Residues 20 to 31 (VLEKWRNLCGVV) form an interaction with calmodulin region. Phosphoserine; by CPK1 is present on Ser45. A helical membrane pass occupies residues 161-181 (FWVFVWEALQDMTLMILGVCA). Residues 182–199 (FVSLIVGIATEGWPKGSH) are Lumenal-facing. A helical membrane pass occupies residues 200 to 220 (DGLGIAASILLVVFVTATSDY). The Cytoplasmic segment spans residues 221 to 348 (RQSLQFRDLD…DDETPLQVKL (128 aa)). The chain crosses the membrane as a helical span at residues 349–368 (NGVATIIGKIGLFFAVVTFA). The Lumenal segment spans residues 369–398 (VLVQGMFMRKLSTGTHWVWSGDEALELLEY). Residues 399 to 416 (FAIAVTIVVVAVPEGLPL) form a helical membrane-spanning segment. Residues 417–810 (AVTLSLAFAM…KWGRSVYINI (394 aa)) are Cytoplasmic-facing. The active-site 4-aspartylphosphate intermediate is Asp454. Asp755 and Asp759 together coordinate Mg(2+). The chain crosses the membrane as a helical span at residues 811 to 829 (QKFVQFQLTVNVVALVVNF). The Lumenal portion of the chain corresponds to 830-840 (SSACLTGSAPL). Residues 841–861 (TAVQLLWVNMIMDTLGALALA) form a helical membrane-spanning segment. Topologically, residues 862–881 (TEPPNDELMKRLPVGRRGNF) are cytoplasmic. The helical transmembrane segment at 882 to 904 (ITNAMWRNILGQAVYQFIVIWIL) threads the bilayer. Residues 905–916 (QAKGKAMFGLDG) are Lumenal-facing. The helical transmembrane segment at 917 to 938 (PDSTLMLNTLIFNCFVFCQVFN) threads the bilayer. At 939 to 956 (EISSREMEEIDVFKGILD) the chain is on the cytoplasmic side. Residues 957–978 (NYVFVVVIGATVFFQIIIIEFL) traverse the membrane as a helical segment. The Lumenal portion of the chain corresponds to 979-988 (GTFASTTPLT). Residues 989–1010 (ITQWIFSIFIGFLGMPIAAGLK) traverse the membrane as a helical segment. Over 1011-1014 (TIPV) the chain is Cytoplasmic.

It belongs to the cation transport ATPase (P-type) (TC 3.A.3) family. Type IIB subfamily.

Its subcellular location is the endoplasmic reticulum membrane. It carries out the reaction Ca(2+)(in) + ATP + H2O = Ca(2+)(out) + ADP + phosphate + H(+). With respect to regulation, activated by calmodulin. This magnesium-dependent enzyme catalyzes the hydrolysis of ATP coupled with the translocation of calcium from the cytosol into the endoplasmic reticulum. This Arabidopsis thaliana (Mouse-ear cress) protein is Calcium-transporting ATPase 2, plasma membrane-type (ACA2).